The chain runs to 159 residues: MSLPDGFYIRRMEEGDLEQVTETLKVLTTVGTITPESFSKLIKYWNEATVWNDNEDKKIMQYNPMVIVDKRTETVAATGNIIIERKIIHELGLCGHIEDIAVNSKYQGQGLGKLLIDQLVTIGFDYGCYKIILDCDEKNVKFYEKCGFSNAGVEMQIRK.

Position 2 is an N-acetylserine (S2). Residues T28, 86-89 (KIIH), and 98-100 (EDI) contribute to the D-glucosamine 6-phosphate site. One can recognise an N-acetyltransferase domain in the interval 28-159 (TTVGTITPES…NAGVEMQIRK (132 aa)). Residues 100–102 (IAV) and 108–113 (GQGLGK) each bind acetyl-CoA. Residues 129–130 (YK) and D134 contribute to the D-glucosamine 6-phosphate site. 143 to 145 (YEK) lines the acetyl-CoA pocket. Residue R158 participates in D-glucosamine 6-phosphate binding.

The protein belongs to the acetyltransferase family. GNA1 subfamily. As to quaternary structure, homodimer.

The enzyme catalyses D-glucosamine 6-phosphate + acetyl-CoA = N-acetyl-D-glucosamine 6-phosphate + CoA + H(+). It participates in nucleotide-sugar biosynthesis; UDP-N-acetyl-alpha-D-glucosamine biosynthesis; N-acetyl-alpha-D-glucosamine 1-phosphate from alpha-D-glucosamine 6-phosphate (route I): step 1/2. The chain is Glucosamine 6-phosphate N-acetyltransferase (GNA1) from Saccharomyces cerevisiae (strain ATCC 204508 / S288c) (Baker's yeast).